Consider the following 247-residue polypeptide: Coproheme decarboxylase (247 aa).

Fe-coproporphyrin III contacts are provided by residues R129, 143–147, H170, Q183, and S221; that span reads YPMDK. Y143 is an active-site residue.

The protein belongs to the ChdC family. Type 1 subfamily. The cofactor is Fe-coproporphyrin III.

It catalyses the reaction Fe-coproporphyrin III + 2 H2O2 + 2 H(+) = heme b + 2 CO2 + 4 H2O. The catalysed reaction is Fe-coproporphyrin III + H2O2 + H(+) = harderoheme III + CO2 + 2 H2O. The enzyme catalyses harderoheme III + H2O2 + H(+) = heme b + CO2 + 2 H2O. Its pathway is porphyrin-containing compound metabolism; protoheme biosynthesis. Involved in coproporphyrin-dependent heme b biosynthesis. Catalyzes the decarboxylation of Fe-coproporphyrin III (coproheme) to heme b (protoheme IX), the last step of the pathway. The reaction occurs in a stepwise manner with a three-propionate intermediate. This Bacillus cytotoxicus (strain DSM 22905 / CIP 110041 / 391-98 / NVH 391-98) protein is Coproheme decarboxylase.